The chain runs to 434 residues: Histidinol dehydrogenase (434 aa).

NAD(+) contacts are provided by Tyr-130, Gln-188, and Asn-211. Substrate contacts are provided by Ser-237, Gln-259, and His-262. The Zn(2+) site is built by Gln-259 and His-262. Active-site proton acceptor residues include Glu-326 and His-327. His-327, Asp-360, Glu-414, and His-419 together coordinate substrate. Asp-360 is a binding site for Zn(2+). His-419 is a binding site for Zn(2+).

This sequence belongs to the histidinol dehydrogenase family. As to quaternary structure, homodimer. Zn(2+) serves as cofactor.

The enzyme catalyses L-histidinol + 2 NAD(+) + H2O = L-histidine + 2 NADH + 3 H(+). It functions in the pathway amino-acid biosynthesis; L-histidine biosynthesis; L-histidine from 5-phospho-alpha-D-ribose 1-diphosphate: step 9/9. Its function is as follows. Catalyzes the sequential NAD-dependent oxidations of L-histidinol to L-histidinaldehyde and then to L-histidine. The polypeptide is Histidinol dehydrogenase (Escherichia coli O6:H1 (strain CFT073 / ATCC 700928 / UPEC)).